The following is a 280-amino-acid chain: Urease accessory protein UreD 3 (280 aa).

Belongs to the UreD family. As to quaternary structure, ureD, UreF and UreG form a complex that acts as a GTP-hydrolysis-dependent molecular chaperone, activating the urease apoprotein by helping to assemble the nickel containing metallocenter of UreC. The UreE protein probably delivers the nickel.

The protein localises to the cytoplasm. Functionally, required for maturation of urease via the functional incorporation of the urease nickel metallocenter. This is Urease accessory protein UreD 3 from Bradyrhizobium sp. (strain ORS 278).